We begin with the raw amino-acid sequence, 429 residues long: Enolase (429 aa).

A (2R)-2-phosphoglycerate-binding site is contributed by Gln163. Glu205 acts as the Proton donor in catalysis. Mg(2+) contacts are provided by Asp242, Glu285, and Asp312. Lys337, Arg366, Ser367, and Lys388 together coordinate (2R)-2-phosphoglycerate. Lys337 acts as the Proton acceptor in catalysis.

It belongs to the enolase family. Mg(2+) serves as cofactor.

It is found in the cytoplasm. The protein localises to the secreted. It localises to the cell surface. The catalysed reaction is (2R)-2-phosphoglycerate = phosphoenolpyruvate + H2O. It functions in the pathway carbohydrate degradation; glycolysis; pyruvate from D-glyceraldehyde 3-phosphate: step 4/5. Its function is as follows. Catalyzes the reversible conversion of 2-phosphoglycerate (2-PG) into phosphoenolpyruvate (PEP). It is essential for the degradation of carbohydrates via glycolysis. The protein is Enolase of Azoarcus sp. (strain BH72).